Consider the following 131-residue polypeptide: uncharacterized protein (131 aa).

This is an uncharacterized protein from Methanocaldococcus jannaschii (strain ATCC 43067 / DSM 2661 / JAL-1 / JCM 10045 / NBRC 100440) (Methanococcus jannaschii).